Here is a 153-residue protein sequence, read N- to C-terminus: 3-hydroxyacyl-[acyl-carrier-protein] dehydratase FabZ (153 aa).

His54 is an active-site residue.

Belongs to the thioester dehydratase family. FabZ subfamily.

The protein resides in the cytoplasm. The catalysed reaction is a (3R)-hydroxyacyl-[ACP] = a (2E)-enoyl-[ACP] + H2O. Its function is as follows. Involved in unsaturated fatty acids biosynthesis. Catalyzes the dehydration of short chain beta-hydroxyacyl-ACPs and long chain saturated and unsaturated beta-hydroxyacyl-ACPs. The protein is 3-hydroxyacyl-[acyl-carrier-protein] dehydratase FabZ of Chlamydia muridarum (strain MoPn / Nigg).